The primary structure comprises 141 residues: Holo-[acyl-carrier-protein] synthase (141 aa).

Residues Asp7 and Glu57 each coordinate Mg(2+).

This sequence belongs to the P-Pant transferase superfamily. AcpS family. Mg(2+) serves as cofactor.

It localises to the cytoplasm. It carries out the reaction apo-[ACP] + CoA = holo-[ACP] + adenosine 3',5'-bisphosphate + H(+). Functionally, transfers the 4'-phosphopantetheine moiety from coenzyme A to a Ser of acyl-carrier-protein. This chain is Holo-[acyl-carrier-protein] synthase, found in Corynebacterium efficiens (strain DSM 44549 / YS-314 / AJ 12310 / JCM 11189 / NBRC 100395).